Reading from the N-terminus, the 1446-residue chain is Major viral transcription factor ICP4 homolog (1446 aa).

Disordered stretches follow at residues 25–59 (AEEEGIASGPDGGSQGSRRRGSSGEDLLFGPGGLF), 73–493 (AAAG…PPAD), 801–987 (PGPA…HTPR), and 1385–1446 (THRP…LLLR). The segment covering 73–94 (AAAGATRPPRPPSAQQQQQPRR) has biased composition (low complexity). The span at 101-112 (VLDDEDEEEDEP) shows a compositional bias: acidic residues. Low complexity-rich tracts occupy residues 166-189 (RSSPSAASPASSSGSPGPSAAPRR) and 216-241 (PAAVAAAPARRGPASPASPAAGPVSA). Positions 262 to 277 (REPLLDEPAAARRLDP) are enriched in basic and acidic residues. Composition is skewed to low complexity over residues 284-306 (SPVSSNPNSNSNSTTTVAVETVA) and 345-397 (GFSS…SSSS). The span at 415 to 426 (GPPPSPPAPAAA) shows a compositional bias: pro residues. The span at 427–442 (PRPSASSASSSAAASP) shows a compositional bias: low complexity. The span at 803–815 (PAEPAPGLPPLWP) shows a compositional bias: pro residues. A compositionally biased stretch (low complexity) spans 827 to 877 (PAAAGAPSGLPGSGPSSPASTKSSSSTKSSSSTKSGLSGSSGYASSPAAGP). Basic residues predominate over residues 883–892 (RRKKKRRAPG). Residues 933–952 (LGLGPAPDPAPALLSSSSSS) show a composition bias toward low complexity.

The protein belongs to the herpesviridae ICP4 family. A long stretch of serine residues may be a major site of phosphorylation.

It is found in the host nucleus. In terms of biological role, this IE protein is a multifunctional protein capable of migrating to the nucleus, binding to DNA, trans-activating other viral genes, and autoregulating its own synthesis. The sequence is that of Major viral transcription factor ICP4 homolog (IE) from Suid herpesvirus 1 (strain Kaplan) (SuHV-1).